Consider the following 410-residue polypeptide: Transcription factor Dp-1 (410 aa).

Lys3 is modified (N6-acetyllysine). Ser23 carries the post-translational modification Phosphoserine; by CDK2. Residues Val77 to Lys114 are disordered. Residues His82–Ser95 are compositionally biased toward polar residues. The segment covering Lys104 to Lys114 has biased composition (basic residues). The interaction with CEBPA stretch occupies residues Arg105–Val127. Residues Gly113 to Pro195 mediate DNA binding. The DEF box motif lies at Asp161–Pro195. The dimerization stretch occupies residues Ser204–Ser277. The enhances binding of RB protein to E2F stretch occupies residues Arg211–Pro327. The tract at residues Glu214–Gln246 is DCB1. A DCB2 region spans residues Leu259 to Ser315. A disordered region spans residues Gly370 to Asp410. The segment covering Ser375 to Ser384 has biased composition (low complexity). Residues Gly394–Asp410 are compositionally biased toward acidic residues.

It belongs to the E2F/DP family. In terms of assembly, component of the E2F:DP transcription factor complex. Forms heterodimers with E2F family members. The complex can interact with hypophosphorylated retinoblastoma protein RB1 and related proteins (RBL1 and RBL2) that inhibit the E2F transactivation domain. This repression involves recruitment of histone deacetylase (HDAC). During the cell cycle, from mid-to-late G1 phase, RB family members become phosphorylated, detach from the DRTF1/E2F complex to render E2F transcriptionally active. Part of the E2F6.com-1 complex in G0 phase is composed of E2F6, MGA, MAX, TFDP1, CBX3, BAT8, EUHMTASE1, RING1, RNF2, MBLR, L3MBTL2 YAF2. Component of the DREAM complex (also named LINC complex) at least composed of E2F4, E2F5, LIN9, LIN37, LIN52, LIN54, MYBL1, MYBL2, RBL1, RBL2, RBBP4, TFDP1 and TFDP2. The complex exists in quiescent cells where it represses cell cycle-dependent genes. It dissociates in S phase when LIN9, LIN37, LIN52 and LIN54 form a subcomplex that binds to MYBL2. The complex TFDP1:E2F1 interacts with CEBPA; the interaction prevents CEBPA binding to target gene promoters and represses its transcriptional activity. Ubiquitinated by the BCR(KBTBD5) complex, leading to its subsequent degradation. In terms of processing, phosphorylation by E2F1-bound cyclin A-CDK2, in the S phase, inhibits E2F-mediated DNA binding and transactivation.

The protein resides in the nucleus. It is found in the cytoplasm. Its function is as follows. Can stimulate E2F-dependent transcription. Binds DNA cooperatively with E2F family members through the E2 recognition site, 5'-TTTC[CG]CGC-3', found in the promoter region of a number of genes whose products are involved in cell cycle regulation or in DNA replication. The E2F1:DP complex appears to mediate both cell proliferation and apoptosis. Blocks adipocyte differentiation by repressing CEBPA binding to its target gene promoters. The chain is Transcription factor Dp-1 (TFDP1) from Bos taurus (Bovine).